A 372-amino-acid chain; its full sequence is Putative KilA-N domain-containing protein L32 (372 aa).

The span at 1-12 shows a compositional bias: basic residues; that stretch reads MPHKAPKSKLFR. Residues 1–129 form a disordered region; it reads MPHKAPKSKL…SDNDKSKDNF (129 aa). Positions 14–36 are enriched in basic and acidic residues; that stretch reads RYVEDSDDETRGRSRNRSVEKSR. Residues 37 to 53 are compositionally biased toward basic residues; the sequence is SKSLTRSKSKSPKKSRS. The segment covering 79 to 120 has biased composition (acidic residues); the sequence is EDSEDSEDSESDQDDDKSDNEQSDSELDDSESDDDETDDNES. The KilA-N domain occupies 151–255; it reads KFAIGKFGDF…IKIGEWIEEW (105 aa).

The polypeptide is Putative KilA-N domain-containing protein L32 (Acanthamoeba polyphaga (Amoeba)).